Consider the following 341-residue polypeptide: Methionine import ATP-binding protein MetN 2 (341 aa).

The 240-residue stretch at 2–241 (IKLNQIVKRY…PQHEVTKRFV (240 aa)) folds into the ABC transporter domain. 38–45 (GFSGAGKS) serves as a coordination point for ATP.

It belongs to the ABC transporter superfamily. Methionine importer (TC 3.A.1.24) family. In terms of assembly, the complex is composed of two ATP-binding proteins (MetN), two transmembrane proteins (MetI) and a solute-binding protein (MetQ).

Its subcellular location is the cell membrane. It carries out the reaction L-methionine(out) + ATP + H2O = L-methionine(in) + ADP + phosphate + H(+). The enzyme catalyses D-methionine(out) + ATP + H2O = D-methionine(in) + ADP + phosphate + H(+). In terms of biological role, part of the ABC transporter complex MetNIQ involved in methionine import. Responsible for energy coupling to the transport system. This is Methionine import ATP-binding protein MetN 2 from Staphylococcus epidermidis (strain ATCC 35984 / DSM 28319 / BCRC 17069 / CCUG 31568 / BM 3577 / RP62A).